A 188-amino-acid chain; its full sequence is PRA1 family protein F4 (188 aa).

Residues 1 to 13 show a composition bias toward polar residues; sequence MANNDEITTSSHA. Residues 1-25 are disordered; that stretch reads MANNDEITTSSHASPAVNHESISRA. A run of 4 helical transmembrane segments spans residues 67–86, 90–107, 119–139, and 142–162; these read YFRSNYAIVILNVIFFSLIW, SLIVFTGLVFLWIFLYFL, IDDRAVLIGLSVITIVLLLLT, and TFNIVAALMAGAVLVLIHAVI.

Belongs to the PRA1 family.

Its subcellular location is the endosome membrane. In terms of biological role, may be involved in both secretory and endocytic intracellular trafficking in the endosomal/prevacuolar compartments. The polypeptide is PRA1 family protein F4 (PRA1F4) (Arabidopsis thaliana (Mouse-ear cress)).